Here is a 214-residue protein sequence, read N- to C-terminus: Cytochrome b (214 aa).

4 helical membrane passes run 31–51, 75–96, 111–131, and 176–196; these read FGSM…FLAI, WIMQ…YIHI, WLSG…GYVL, and FFAL…LHIL. 2 residues coordinate heme b: His-81 and His-95. The heme b site is built by His-180 and His-194. His-199 is an a ubiquinone binding site.

It belongs to the cytochrome b family. In terms of assembly, the cytochrome bc1 complex contains 3 respiratory subunits (MT-CYB, CYC1 and UQCRFS1), 2 core proteins (UQCRC1 and UQCRC2) and probably 6 low-molecular weight proteins. Heme b is required as a cofactor.

It is found in the mitochondrion inner membrane. In terms of biological role, component of the ubiquinol-cytochrome c reductase complex (complex III or cytochrome b-c1 complex) that is part of the mitochondrial respiratory chain. The b-c1 complex mediates electron transfer from ubiquinol to cytochrome c. Contributes to the generation of a proton gradient across the mitochondrial membrane that is then used for ATP synthesis. The sequence is that of Cytochrome b (MT-CYB) from Crotalus atrox (Western diamondback rattlesnake).